The primary structure comprises 277 residues: Methylglyoxal reductase DkgA (277 aa).

The active-site Proton donor is Y51. Residue H107 coordinates substrate. 187-241 (SPLAQGGKGVFDQEIIRKLAQQYNKTPAQIVIRWHLDSGLIVIPKSVTPARIREN) provides a ligand contact to NADP(+).

Belongs to the aldo/keto reductase family. Monomer.

The protein resides in the cytoplasm. The enzyme catalyses hydroxyacetone + NADP(+) = methylglyoxal + NADPH + H(+). Aldo-keto reductase that significantly contributes to cellular methylglyoxal detoxification by catalyzing the NADPH-dependent conversion of methylglyoxal to acetol. In Yersinia pestis, this protein is Methylglyoxal reductase DkgA.